The chain runs to 379 residues: Glutamate 5-kinase (379 aa).

Lys-15 contacts ATP. The substrate site is built by Ser-54, Asp-144, and Asn-156. Residue 176-177 (TD) participates in ATP binding. Residues 282-360 (KGVILVDAGA…GEIERALGYK (79 aa)) enclose the PUA domain.

It belongs to the glutamate 5-kinase family.

It localises to the cytoplasm. The enzyme catalyses L-glutamate + ATP = L-glutamyl 5-phosphate + ADP. It participates in amino-acid biosynthesis; L-proline biosynthesis; L-glutamate 5-semialdehyde from L-glutamate: step 1/2. Functionally, catalyzes the transfer of a phosphate group to glutamate to form L-glutamate 5-phosphate. In Anaeromyxobacter dehalogenans (strain 2CP-C), this protein is Glutamate 5-kinase.